Consider the following 628-residue polypeptide: Biosynthetic arginine decarboxylase (628 aa).

The residue at position 99 (lysine 99) is an N6-(pyridoxal phosphate)lysine. 279 to 289 (VDVGGGLGIDY) is a substrate binding site.

The protein belongs to the Orn/Lys/Arg decarboxylase class-II family. SpeA subfamily. The cofactor is Mg(2+). Requires pyridoxal 5'-phosphate as cofactor.

It catalyses the reaction L-arginine + H(+) = agmatine + CO2. Catalyzes the biosynthesis of agmatine from arginine. The protein is Biosynthetic arginine decarboxylase of Xylella fastidiosa (strain 9a5c).